Consider the following 335-residue polypeptide: Glycerol-3-phosphate dehydrogenase [NAD(P)+] (335 aa).

NADPH-binding residues include serine 15, tyrosine 16, histidine 36, and lysine 110. Sn-glycerol 3-phosphate-binding residues include lysine 110, glycine 139, and threonine 141. Alanine 143 contributes to the NADPH binding site. The sn-glycerol 3-phosphate site is built by lysine 195, aspartate 248, serine 258, arginine 259, and asparagine 260. Lysine 195 functions as the Proton acceptor in the catalytic mechanism. NADPH is bound at residue arginine 259. NADPH is bound by residues valine 283 and glutamate 285.

Belongs to the NAD-dependent glycerol-3-phosphate dehydrogenase family.

The protein resides in the cytoplasm. The enzyme catalyses sn-glycerol 3-phosphate + NAD(+) = dihydroxyacetone phosphate + NADH + H(+). It catalyses the reaction sn-glycerol 3-phosphate + NADP(+) = dihydroxyacetone phosphate + NADPH + H(+). The protein operates within membrane lipid metabolism; glycerophospholipid metabolism. In terms of biological role, catalyzes the reduction of the glycolytic intermediate dihydroxyacetone phosphate (DHAP) to sn-glycerol 3-phosphate (G3P), the key precursor for phospholipid synthesis. In Haemophilus influenzae (strain ATCC 51907 / DSM 11121 / KW20 / Rd), this protein is Glycerol-3-phosphate dehydrogenase [NAD(P)+].